Reading from the N-terminus, the 367-residue chain is Cytochrome b (367 aa).

Transmembrane regions (helical) follow at residues 33–53, 77–98, 113–133, and 178–198; these read FGSLLGICLALQILTGLFLAM, WVLRYMHANGASMFFICLYLHI, WNMGVILLFAVMATAFMGYVL, and FFAFHFLLPFIISALVMVHLL. Heme b-binding residues include H83 and H97. 2 residues coordinate heme b: H182 and H196. H201 serves as a coordination point for a ubiquinone. 4 helical membrane-spanning segments follow: residues 226 to 246, 288 to 308, 320 to 340, and 347 to 367; these read IKDILGFFMMMLILLCLVLFS, LGGVLALVLSILILIIIPFLH, FSQCLFWLLVADLLTLTWIGG, and YIIIGQLASILYFMIIIVIMP.

This sequence belongs to the cytochrome b family. The cytochrome bc1 complex contains 11 subunits: 3 respiratory subunits (MT-CYB, CYC1 and UQCRFS1), 2 core proteins (UQCRC1 and UQCRC2) and 6 low-molecular weight proteins (UQCRH/QCR6, UQCRB/QCR7, UQCRQ/QCR8, UQCR10/QCR9, UQCR11/QCR10 and a cleavage product of UQCRFS1). This cytochrome bc1 complex then forms a dimer. Requires heme b as cofactor.

It localises to the mitochondrion inner membrane. In terms of biological role, component of the ubiquinol-cytochrome c reductase complex (complex III or cytochrome b-c1 complex) that is part of the mitochondrial respiratory chain. The b-c1 complex mediates electron transfer from ubiquinol to cytochrome c. Contributes to the generation of a proton gradient across the mitochondrial membrane that is then used for ATP synthesis. The sequence is that of Cytochrome b (MT-CYB) from Hypsugo savii (Savi's pipistrelle).